The following is a 192-amino-acid chain: uncharacterized protein (192 aa).

Residues 29 to 160 (HRQAAVLIPI…PLDIYRRGDS (132 aa)) enclose the Nudix hydrolase domain. A Nudix box motif is present at residues 67 to 89 (GAVDDTDTSVIAAALREAEEEVA). Mg(2+)-binding residues include Glu-83 and Glu-87.

The protein belongs to the Nudix hydrolase family. PCD1 subfamily. Mn(2+) is required as a cofactor. It depends on Mg(2+) as a cofactor.

Its function is as follows. Probably mediates the hydrolysis of some nucleoside diphosphate derivatives. This is an uncharacterized protein from Escherichia coli O6:H1 (strain CFT073 / ATCC 700928 / UPEC).